A 196-amino-acid polypeptide reads, in one-letter code: Peptide deformylase (196 aa).

The Fe cation site is built by C105 and H147. E148 is an active-site residue. Position 151 (H151) interacts with Fe cation.

This sequence belongs to the polypeptide deformylase family. Fe(2+) serves as cofactor.

It carries out the reaction N-terminal N-formyl-L-methionyl-[peptide] + H2O = N-terminal L-methionyl-[peptide] + formate. Removes the formyl group from the N-terminal Met of newly synthesized proteins. Requires at least a dipeptide for an efficient rate of reaction. N-terminal L-methionine is a prerequisite for activity but the enzyme has broad specificity at other positions. This Flavobacterium johnsoniae (strain ATCC 17061 / DSM 2064 / JCM 8514 / BCRC 14874 / CCUG 350202 / NBRC 14942 / NCIMB 11054 / UW101) (Cytophaga johnsonae) protein is Peptide deformylase.